Reading from the N-terminus, the 379-residue chain is Chaperone protein DnaJ (379 aa).

In terms of domain architecture, J spans 5–70 (DYYEVLGVGK…EKKAAYDQYG (66 aa)). The CR-type zinc finger occupies 139 to 217 (GHEAQIRVPH…CHGQGKLKSQ (79 aa)). Zn(2+) is bound by residues C152, C155, C169, C172, C191, C194, C205, and C208. CXXCXGXG motif repeat units follow at residues 152–159 (CDHCHGNG), 169–176 (CPTCHGAG), 191–198 (CPKCHGSG), and 205–212 (CTKCHGQG). The interval 356–379 (VHEGGSRHSPQEQSWLDKVKSFFS) is disordered.

This sequence belongs to the DnaJ family. As to quaternary structure, homodimer. It depends on Zn(2+) as a cofactor.

The protein resides in the cytoplasm. In terms of biological role, participates actively in the response to hyperosmotic and heat shock by preventing the aggregation of stress-denatured proteins and by disaggregating proteins, also in an autonomous, DnaK-independent fashion. Unfolded proteins bind initially to DnaJ; upon interaction with the DnaJ-bound protein, DnaK hydrolyzes its bound ATP, resulting in the formation of a stable complex. GrpE releases ADP from DnaK; ATP binding to DnaK triggers the release of the substrate protein, thus completing the reaction cycle. Several rounds of ATP-dependent interactions between DnaJ, DnaK and GrpE are required for fully efficient folding. Also involved, together with DnaK and GrpE, in the DNA replication of plasmids through activation of initiation proteins. This is Chaperone protein DnaJ from Cupriavidus pinatubonensis (strain JMP 134 / LMG 1197) (Cupriavidus necator (strain JMP 134)).